The following is a 515-amino-acid chain: MTKRALISVSDKSGIVDFAKELKNLGWDIISTGGTKVSLDDAGVETIAIDDVTGFPEMMDGRVKTLHPNIHGGLLARRDADSHLQAAKDNNIELIDLVVVNLYPFKETILRPDVTYDLAVENIDIGGPSMLRSAAKNHASVTVVVDPADYATVLGELADASQTTFKTRQRLAAKAFRHTAAYDALIAEYFTAQVGEAKPEKLTITYDLKQAMRYGENPQQDADFYQKALPTDYSIASAKQLNGKELSFNNIRDADAAIRIIRDFKASPTVVALKHMNPCGIGQADDIETAWDYAYEADPVSIFGGIVVLNREVDAATAGKMHPIFLEIIIAPSYSEEALAILTNKKKNLRILELPFDAQAASEVEAEYTGVVGGLLVQNQDVVAENPSDWQVVTDRQPTEQEATALEFAWKAIKYVKSNGIIITNDHMTLGLGAGQTNRVGSVKIAIEQAKDHLDGAVLASDAFFPFADNIEEIAAAGIKAIIQPGGSVRDQESIDAANKHGLTMIFTGVRHFRH.

The MGS-like domain maps to 1 to 145 (MTKRALISVS…KNHASVTVVV (145 aa)).

It belongs to the PurH family.

The enzyme catalyses (6R)-10-formyltetrahydrofolate + 5-amino-1-(5-phospho-beta-D-ribosyl)imidazole-4-carboxamide = 5-formamido-1-(5-phospho-D-ribosyl)imidazole-4-carboxamide + (6S)-5,6,7,8-tetrahydrofolate. It carries out the reaction IMP + H2O = 5-formamido-1-(5-phospho-D-ribosyl)imidazole-4-carboxamide. It functions in the pathway purine metabolism; IMP biosynthesis via de novo pathway; 5-formamido-1-(5-phospho-D-ribosyl)imidazole-4-carboxamide from 5-amino-1-(5-phospho-D-ribosyl)imidazole-4-carboxamide (10-formyl THF route): step 1/1. Its pathway is purine metabolism; IMP biosynthesis via de novo pathway; IMP from 5-formamido-1-(5-phospho-D-ribosyl)imidazole-4-carboxamide: step 1/1. This Streptococcus agalactiae serotype Ia (strain ATCC 27591 / A909 / CDC SS700) protein is Bifunctional purine biosynthesis protein PurH.